The primary structure comprises 93 residues: Putative pterin-4-alpha-carbinolamine dehydratase (93 aa).

The protein belongs to the pterin-4-alpha-carbinolamine dehydratase family.

The enzyme catalyses (4aS,6R)-4a-hydroxy-L-erythro-5,6,7,8-tetrahydrobiopterin = (6R)-L-erythro-6,7-dihydrobiopterin + H2O. This Chloroflexus aurantiacus (strain ATCC 29366 / DSM 635 / J-10-fl) protein is Putative pterin-4-alpha-carbinolamine dehydratase.